The primary structure comprises 76 residues: Conotoxin Vc6.9 (76 aa).

The N-terminal stretch at 1-19 (MEKLTILLLVAAVLMSTQA) is a signal peptide. Residues 20 to 41 (LMQEQRQKAKINLFSKRKPSAE) constitute a propeptide that is removed on maturation. Disulfide bonds link C49/C63, C56/C67, and C62/C72.

This sequence belongs to the conotoxin O2 superfamily. In terms of tissue distribution, expressed by the venom duct.

It localises to the secreted. Inhibits voltage-gated ion channels. The chain is Conotoxin Vc6.9 from Conus victoriae (Queen Victoria cone).